Consider the following 619-residue polypeptide: Chaperone protein HscA homolog (619 aa).

The protein belongs to the heat shock protein 70 family.

Its function is as follows. Chaperone involved in the maturation of iron-sulfur cluster-containing proteins. Has a low intrinsic ATPase activity which is markedly stimulated by HscB. In Shewanella denitrificans (strain OS217 / ATCC BAA-1090 / DSM 15013), this protein is Chaperone protein HscA homolog.